The primary structure comprises 6359 residues: Bacitracin synthase 3 (6359 aa).

The segment at 461–1034 is domain 1 (isoleucine-activating); sequence LHELFEEQAM…IKGLGEYIRS (574 aa). The segment covering 941–953 has biased composition (basic and acidic residues); that stretch reads VDRKALPEPDRTA. A disordered region spans residues 941–962; it reads VDRKALPEPDRTAGAENEYEAP. 5 consecutive Carrier domains span residues 961-1036, 1993-2067, 3497-3572, 4539-4613, and 6047-6122; these read APRN…RSTK, APRN…KKQS, APRN…ESMK, PPRN…KAES, and PPRH…KHAQ. O-(pantetheine 4'-phosphoryl)serine occurs at positions 996, 2028, and 3532. Positions 1517-2064 are domain 2 (D-phenylalanine-activating); sequence FEDQTLTYRQ…RIKDLAKYVK (548 aa). Residues 2999–3570 are domain 3 (histidine-activating); sequence NKTIHQLFEE…IKDIGDFIES (572 aa). The segment at 4047-4612 is domain 4 (D-aspartic acid-activating); it reads EQTAVVYADE…KSLSRYVKAE (566 aa). The interval 4521-4544 is disordered; sequence IDTAALPEPQPGKETEYEPPRNET. Basic and acidic residues predominate over residues 4531–4544; sequence PGKETEYEPPRNET. An O-(pantetheine 4'-phosphoryl)serine mark is found at serine 4574 and serine 6082. The interval 5549-6129 is domain 5 (asparagine-activating); it reads IHRLFEEQAE…HAQDLLKDYT (581 aa).

Belongs to the ATP-dependent AMP-binding enzyme family. In terms of assembly, large multienzyme complex of BA1, BA2 and BA3. Requires pantetheine 4'-phosphate as cofactor.

The catalysed reaction is L-aspartate = D-aspartate. It catalyses the reaction L-phenylalanine + ATP + H2O = D-phenylalanine + AMP + diphosphate + H(+). It participates in antibiotic biosynthesis; bacitracin biosynthesis. In terms of biological role, induces peptide synthesis, activates and incorporates five amino acids, forms a thiazoline ring between the first two amino acids and incorporates a D-glutamine in the fourth position. The chain is Bacitracin synthase 3 (bacC) from Bacillus licheniformis.